Here is a 62-residue protein sequence, read N- to C-terminus: Conotoxin Im11.9 (62 aa).

Positions 1 to 22 are cleaved as a signal peptide; it reads MFRVTSVLLVIVLLNLVVLTNA. 4 disulfides stabilise this stretch: C23–C33, C27–C38, C32–C41, and C37–C46. A propeptide spanning residues 23-49 is cleaved from the precursor; it reads CHMDCSKMTCCSGICCFYCGRPMCPGT.

This sequence belongs to the conotoxin I2 superfamily. In terms of tissue distribution, expressed by the venom duct.

It localises to the secreted. In terms of biological role, probable neurotoxin. The chain is Conotoxin Im11.9 from Conus imperialis (Imperial cone).